The following is a 370-amino-acid chain: UDP-N-acetylglucosamine--N-acetylmuramyl-(pentapeptide) pyrophosphoryl-undecaprenol N-acetylglucosamine transferase (370 aa).

UDP-N-acetyl-alpha-D-glucosamine contacts are provided by residues 10–12 (TGG), Asn-126, Ser-200, Ile-255, and Gln-300.

It belongs to the glycosyltransferase 28 family. MurG subfamily.

The protein localises to the cell membrane. The enzyme catalyses Mur2Ac(oyl-L-Ala-gamma-D-Glu-L-Lys-D-Ala-D-Ala)-di-trans,octa-cis-undecaprenyl diphosphate + UDP-N-acetyl-alpha-D-glucosamine = beta-D-GlcNAc-(1-&gt;4)-Mur2Ac(oyl-L-Ala-gamma-D-Glu-L-Lys-D-Ala-D-Ala)-di-trans,octa-cis-undecaprenyl diphosphate + UDP + H(+). Its pathway is cell wall biogenesis; peptidoglycan biosynthesis. Functionally, cell wall formation. Catalyzes the transfer of a GlcNAc subunit on undecaprenyl-pyrophosphoryl-MurNAc-pentapeptide (lipid intermediate I) to form undecaprenyl-pyrophosphoryl-MurNAc-(pentapeptide)GlcNAc (lipid intermediate II). The sequence is that of UDP-N-acetylglucosamine--N-acetylmuramyl-(pentapeptide) pyrophosphoryl-undecaprenol N-acetylglucosamine transferase from Lactobacillus gasseri (strain ATCC 33323 / DSM 20243 / BCRC 14619 / CIP 102991 / JCM 1131 / KCTC 3163 / NCIMB 11718 / NCTC 13722 / AM63).